Consider the following 285-residue polypeptide: Probable glucose uptake protein GlcU (285 aa).

Transmembrane regions (helical) follow at residues F4–V21, G26–F48, V52–G71, V84–V106, W110–L132, I153–V175, A180–F197, I210–Q227, V232–L254, and I266–A283.

It belongs to the GRP transporter (TC 2.A.7.5) family.

It localises to the cell membrane. Functionally, involved in the uptake of glucose. The polypeptide is Probable glucose uptake protein GlcU (glcU) (Bacillus anthracis).